Here is a 161-residue protein sequence, read N- to C-terminus: SsrA-binding protein (161 aa).

Over residues 139–153 (RESIKRKEENRELDR) the composition is skewed to basic and acidic residues. The disordered stretch occupies residues 139–161 (RESIKRKEENRELDRLRKRRRQE).

This sequence belongs to the SmpB family.

The protein localises to the cytoplasm. Required for rescue of stalled ribosomes mediated by trans-translation. Binds to transfer-messenger RNA (tmRNA), required for stable association of tmRNA with ribosomes. tmRNA and SmpB together mimic tRNA shape, replacing the anticodon stem-loop with SmpB. tmRNA is encoded by the ssrA gene; the 2 termini fold to resemble tRNA(Ala) and it encodes a 'tag peptide', a short internal open reading frame. During trans-translation Ala-aminoacylated tmRNA acts like a tRNA, entering the A-site of stalled ribosomes, displacing the stalled mRNA. The ribosome then switches to translate the ORF on the tmRNA; the nascent peptide is terminated with the 'tag peptide' encoded by the tmRNA and targeted for degradation. The ribosome is freed to recommence translation, which seems to be the essential function of trans-translation. The polypeptide is SsrA-binding protein (Syntrophobacter fumaroxidans (strain DSM 10017 / MPOB)).